A 264-amino-acid polypeptide reads, in one-letter code: MLIHPQFDPIAFSVGPLSVRWYGLMYLIAFLLFMTLGRVHARRRPELGWNAQQLDDLLLYGMLGVVLGGRLGEVLFFQPAYYFSHPAEILAIWKGGMSFHGGFLGVLVAMWLYGRRSGKGFWQVTDFIAPLVPTGLAAGRLGNFINGELWGRPVQTDVPWAMVYPWVDALPRHPSQLYQVAGEGLLLFAILWVYSARPRPLKAVSAMFLIGYGVLRFAAEFFRTPDPGIFGTLSLGLSTAQWLCVPMIAVGVGLLASTRTDPAH.

7 helical membrane-spanning segments follow: residues 14–34, 57–77, 89–109, 127–147, 176–196, 202–222, and 235–255; these read VGPL…LLFM, LLLY…VLFF, ILAI…VLVA, FIAP…FING, QLYQ…VYSA, KAVS…AEFF, and LGLS…VGLL. An a 1,2-diacyl-sn-glycero-3-phospho-(1'-sn-glycerol)-binding site is contributed by R140.

Belongs to the Lgt family.

Its subcellular location is the cell inner membrane. The catalysed reaction is L-cysteinyl-[prolipoprotein] + a 1,2-diacyl-sn-glycero-3-phospho-(1'-sn-glycerol) = an S-1,2-diacyl-sn-glyceryl-L-cysteinyl-[prolipoprotein] + sn-glycerol 1-phosphate + H(+). It functions in the pathway protein modification; lipoprotein biosynthesis (diacylglyceryl transfer). Functionally, catalyzes the transfer of the diacylglyceryl group from phosphatidylglycerol to the sulfhydryl group of the N-terminal cysteine of a prolipoprotein, the first step in the formation of mature lipoproteins. The chain is Phosphatidylglycerol--prolipoprotein diacylglyceryl transferase from Aromatoleum aromaticum (strain DSM 19018 / LMG 30748 / EbN1) (Azoarcus sp. (strain EbN1)).